The primary structure comprises 79 residues: Acyl carrier protein (79 aa).

Residues 3-78 (QEILEKVCSI…DAVKFIEEKK (76 aa)) form the Carrier domain. Ser38 carries the post-translational modification O-(pantetheine 4'-phosphoryl)serine.

This sequence belongs to the acyl carrier protein (ACP) family. Post-translationally, 4'-phosphopantetheine is transferred from CoA to a specific serine of apo-ACP by AcpS. This modification is essential for activity because fatty acids are bound in thioester linkage to the sulfhydryl of the prosthetic group.

The protein localises to the cytoplasm. The protein operates within lipid metabolism; fatty acid biosynthesis. Its function is as follows. Carrier of the growing fatty acid chain in fatty acid biosynthesis. The chain is Acyl carrier protein from Prochlorococcus marinus (strain MIT 9301).